We begin with the raw amino-acid sequence, 259 residues long: MFGTRFFAYQFCKNWLSKRPGLVFWSSVATINAMYQTRPLYCESVTKTIQQTYEGLVQKRINNEDELFLLGSGPRYVSFLSIHVYDIELYIQKKDVQTVHTILQKEVDPKLGLEMSMKDEEIGSRIVAALLKNEMKYAIKIVPTRNTNFSHLRGGFVRGLQSRMSQNDPAEQAAVSKFRSTFPVNRTCFKETALWMKLYGNDFCYIYKDSEIGHMHDENYMVSNLFLKGYLVGPRVNSEQARESVCLTLRRIMDGTLLF.

This is an uncharacterized protein from Schizosaccharomyces pombe (strain 972 / ATCC 24843) (Fission yeast).